We begin with the raw amino-acid sequence, 337 residues long: D-alanine--D-alanine ligase (337 aa).

Residues 124 to 330 (KMWFSALGIP…FTEYLSLVIN (207 aa)) form the ATP-grasp domain. ATP is bound at residue 154–209 (ALAQWGSIFVKAASQGSSVGCYKVDDSDKVAGVLKDAFGYAPYVIVEKTIKARELE). Mg(2+) is bound by residues Asp-284, Glu-297, and Asn-299.

This sequence belongs to the D-alanine--D-alanine ligase family. The cofactor is Mg(2+). Mn(2+) is required as a cofactor.

Its subcellular location is the cytoplasm. The enzyme catalyses 2 D-alanine + ATP = D-alanyl-D-alanine + ADP + phosphate + H(+). It functions in the pathway cell wall biogenesis; peptidoglycan biosynthesis. In terms of biological role, cell wall formation. The polypeptide is D-alanine--D-alanine ligase (Shewanella baltica (strain OS195)).